Reading from the N-terminus, the 192-residue chain is Ion-translocating oxidoreductase complex subunit B (192 aa).

Residues 1 to 26 (MNTIWIAVGALALLGLVFGAILGYAS) are hydrophobic. Residues 32–91 (EDDPVVEKIDAILPQSQCGQCGYPGCRPYAEAVGLQGEKINRCAPGGEAVMLKIAELLNV) enclose the 4Fe-4S domain. Positions 49, 52, 57, 74, 117, 120, 123, 127, 147, 150, 153, and 157 each coordinate [4Fe-4S] cluster. 4Fe-4S ferredoxin-type domains are found at residues 108 to 137 (MLAV…GATR) and 138 to 167 (AMHT…LRPV).

Belongs to the 4Fe4S bacterial-type ferredoxin family. RnfB subfamily. In terms of assembly, the complex is composed of six subunits: RsxA, RsxB, RsxC, RsxD, RsxE and RsxG. Requires [4Fe-4S] cluster as cofactor.

Its subcellular location is the cell inner membrane. Its function is as follows. Part of a membrane-bound complex that couples electron transfer with translocation of ions across the membrane. Required to maintain the reduced state of SoxR. The chain is Ion-translocating oxidoreductase complex subunit B from Salmonella newport (strain SL254).